Reading from the N-terminus, the 387-residue chain is Protein WHAT'S THIS FACTOR 9, mitochondrial (387 aa).

The N-terminal 24 residues, 1-24 (MLSIRRHAKTVASSCTNLTQKRTY), are a transit peptide targeting the mitochondrion. Residues 32–358 (KRDPYFDNIE…KKYIQLMKNS (327 aa)) form the PORR domain.

The protein resides in the mitochondrion. Functionally, RNA-binding protein involved in group II intron splicing. Binds specific group II introns and promotes their splicing (e.g. rpl2 and ccmFC). The protein is Protein WHAT'S THIS FACTOR 9, mitochondrial of Arabidopsis thaliana (Mouse-ear cress).